Reading from the N-terminus, the 84-residue chain is Small ribosomal subunit protein bS20 (84 aa).

A disordered region spans residues 1–25; it reads MANIVSNEKTYRHTQKVRKENHAKM.

It belongs to the bacterial ribosomal protein bS20 family.

Its function is as follows. Binds directly to 16S ribosomal RNA. This chain is Small ribosomal subunit protein bS20, found in Ureaplasma parvum serovar 3 (strain ATCC 700970).